The sequence spans 368 residues: Probable pectate lyase 4 (368 aa).

The signal sequence occupies residues 1–25 (MASLVVIVSLLLAAFASPLLETAHS). Residue Asn-27 is glycosylated (N-linked (GlcNAc...) asparagine). Positions 167, 191, and 195 each coordinate Ca(2+). Arg-247 is an active-site residue.

The protein belongs to the polysaccharide lyase 1 family. Ca(2+) serves as cofactor.

It catalyses the reaction Eliminative cleavage of (1-&gt;4)-alpha-D-galacturonan to give oligosaccharides with 4-deoxy-alpha-D-galact-4-enuronosyl groups at their non-reducing ends.. It functions in the pathway glycan metabolism; pectin degradation; 2-dehydro-3-deoxy-D-gluconate from pectin: step 2/5. The sequence is that of Probable pectate lyase 4 from Arabidopsis thaliana (Mouse-ear cress).